The primary structure comprises 329 residues: Methionyl-tRNA formyltransferase (329 aa).

Residue 112–115 coordinates (6S)-5,6,7,8-tetrahydrofolate; sequence SILP.

The protein belongs to the Fmt family.

The enzyme catalyses L-methionyl-tRNA(fMet) + (6R)-10-formyltetrahydrofolate = N-formyl-L-methionyl-tRNA(fMet) + (6S)-5,6,7,8-tetrahydrofolate + H(+). Attaches a formyl group to the free amino group of methionyl-tRNA(fMet). The formyl group appears to play a dual role in the initiator identity of N-formylmethionyl-tRNA by promoting its recognition by IF2 and preventing the misappropriation of this tRNA by the elongation apparatus. This chain is Methionyl-tRNA formyltransferase, found in Shewanella sediminis (strain HAW-EB3).